Consider the following 468-residue polypeptide: uncharacterized protein (468 aa).

12 helical membrane-spanning segments follow: residues 13–33, 40–60, 76–96, 112–132, 141–161, 194–214, 237–257, 260–280, 328–348, 354–374, 414–434, and 443–463; these read LEAFSPIIVMLLLLGLGYALF, LMIISTVFAGFLVFKLGHCYL, ALLILITVGLLIGTWISGGTI, LYVTALFLTAIVSICTGTSWG, FMGVAIGLDANLAATAGAVVA, LLYTTLPSFILSATVYVVYGL, VYHFNFLLLIPVAIVLWGSIT, PTIPVMLLSAFIAIINAILIQ, CFCALSFAGVLQLSGALTVII, FVHSTLSLIITTILCGLTMIG, IIEPILPWTAAGAYMAGTLGV, and AILCWSGIIFAIIYGASGIGI.

This sequence belongs to the NhaC Na(+)/H(+) (TC 2.A.35) antiporter family.

It is found in the cell membrane. This is an uncharacterized protein from Haemophilus influenzae (strain ATCC 51907 / DSM 11121 / KW20 / Rd).